The chain runs to 669 residues: DNA ligase (669 aa).

NAD(+)-binding positions include 34 to 38 (DAEYD), 83 to 84 (SL), and Glu-114. Lys-116 serves as the catalytic N6-AMP-lysine intermediate. Arg-137, Glu-171, Lys-287, and Lys-311 together coordinate NAD(+). Zn(2+) is bound by residues Cys-405, Cys-408, Cys-423, and Cys-428. The BRCT domain maps to 591-669 (NVESYFAGKT…EERFLQELNK (79 aa)).

This sequence belongs to the NAD-dependent DNA ligase family. LigA subfamily. Mg(2+) serves as cofactor. It depends on Mn(2+) as a cofactor.

The catalysed reaction is NAD(+) + (deoxyribonucleotide)n-3'-hydroxyl + 5'-phospho-(deoxyribonucleotide)m = (deoxyribonucleotide)n+m + AMP + beta-nicotinamide D-nucleotide.. In terms of biological role, DNA ligase that catalyzes the formation of phosphodiester linkages between 5'-phosphoryl and 3'-hydroxyl groups in double-stranded DNA using NAD as a coenzyme and as the energy source for the reaction. It is essential for DNA replication and repair of damaged DNA. The protein is DNA ligase of Bacillus cereus (strain B4264).